Reading from the N-terminus, the 796-residue chain is Protein translocase subunit SecA 2 (796 aa).

Residues Gln-84, 102-106 (GEGKT), and Asp-496 each bind ATP.

It belongs to the SecA family. In terms of assembly, monomer and homodimer (Potential). Part of the accessory SecA2/SecY2 protein translocation apparatus required to export cell wall protein SraP.

It is found in the cell membrane. The protein localises to the cytoplasm. It carries out the reaction ATP + H2O + cellular proteinSide 1 = ADP + phosphate + cellular proteinSide 2.. Part of the accessory SecA2/SecY2 system specifically required to export SraP, a serine-rich repeat cell wall protein encoded upstream in the same operon. This chain is Protein translocase subunit SecA 2, found in Staphylococcus aureus (strain NCTC 8325 / PS 47).